A 667-amino-acid polypeptide reads, in one-letter code: E3 ubiquitin-protein ligase RNF6 (667 aa).

7 disordered regions span residues 1 to 25, 75 to 100, 116 to 216, 295 to 355, 396 to 419, 507 to 532, and 537 to 556; these read MDPS…RRWQ, KEQL…RAHS, GNVT…QGSF, FSSR…TPLS, ETRD…STVE, GDAA…GAEM, and EPAP…QLGR. Residues 79-90 show a composition bias toward low complexity; it reads ASQPGSDSAASD. The segment covering 116-139 has biased composition (polar residues); the sequence is GNVTRSGQNGNQSWRAVSRTNPNS. Positions 150 to 163 are enriched in basic and acidic residues; sequence INPDNRGSEMHGED. A compositionally biased stretch (low complexity) spans 191–200; the sequence is SQTSMSSSGP. Polar residues predominate over residues 296–327; the sequence is SSRSRSPIQRQNGTVHHNSQRQGRPVQQTGRN. Low complexity predominate over residues 516-530; it reads HGRASSQASQAQDGA. Residue serine 559 is modified to Phosphoserine. The segment at 614–655 adopts an RING-type; atypical zinc-finger fold; it reads CSVCISDYVAGNKLRQLPCLHEFHIHCIDRWLSENCTCPVCR.

The protein belongs to the RNF12 family. Widely expressed with higher expression in the testis in both germ cells and Sertoli cells.

The protein resides in the nucleus. It is found in the cytoplasm. It localises to the cell projection. Its subcellular location is the axon. The protein localises to the PML body. It carries out the reaction S-ubiquitinyl-[E2 ubiquitin-conjugating enzyme]-L-cysteine + [acceptor protein]-L-lysine = [E2 ubiquitin-conjugating enzyme]-L-cysteine + N(6)-ubiquitinyl-[acceptor protein]-L-lysine.. Its pathway is protein modification; protein ubiquitination. Functionally, E3 ubiquitin-protein ligase mediating 'Lys-48'-linked polyubiquitination of LIMK1 and its subsequent targeting to the proteasome for degradation. Negatively regulates axonal outgrowth through regulation of the LIMK1 turnover. Mediates 'Lys-6' and 'Lys-27'-linked polyubiquitination of AR/androgen receptor thereby modulating its transcriptional activity. May also bind DNA and function as a transcriptional regulator. Mediates polyubiquitination of QKI in macrophages, leading to its degradation. The chain is E3 ubiquitin-protein ligase RNF6 from Mus musculus (Mouse).